The sequence spans 386 residues: Lipoyl synthase, mitochondrial (386 aa).

The tract at residues M1–P48 is disordered. Residues R13–D34 are compositionally biased toward polar residues. A compositionally biased stretch (pro residues) spans V37–A46. Positions 113, 118, 124, 144, 148, 151, and 360 each coordinate [4Fe-4S] cluster. In terms of domain architecture, Radical SAM core spans E129–R349.

It belongs to the radical SAM superfamily. Lipoyl synthase family. It depends on [4Fe-4S] cluster as a cofactor.

The protein resides in the mitochondrion. It catalyses the reaction [[Fe-S] cluster scaffold protein carrying a second [4Fe-4S](2+) cluster] + N(6)-octanoyl-L-lysyl-[protein] + 2 oxidized [2Fe-2S]-[ferredoxin] + 2 S-adenosyl-L-methionine + 4 H(+) = [[Fe-S] cluster scaffold protein] + N(6)-[(R)-dihydrolipoyl]-L-lysyl-[protein] + 4 Fe(3+) + 2 hydrogen sulfide + 2 5'-deoxyadenosine + 2 L-methionine + 2 reduced [2Fe-2S]-[ferredoxin]. It participates in protein modification; protein lipoylation via endogenous pathway; protein N(6)-(lipoyl)lysine from octanoyl-[acyl-carrier-protein]: step 2/2. Catalyzes the radical-mediated insertion of two sulfur atoms into the C-6 and C-8 positions of the octanoyl moiety bound to the lipoyl domains of lipoate-dependent enzymes, thereby converting the octanoylated domains into lipoylated derivatives. The sequence is that of Lipoyl synthase, mitochondrial from Sorghum bicolor (Sorghum).